The primary structure comprises 138 residues: MTLNLRVMAPNRIVWNSEAQEIILSTNSGQIGILPNHAPLLTALDIGVMKVRINSDWCTMALMGGFAMIENNQLTILVNEAEKGSDINLEEAQQTFDLAQESLNQATGKKQTIEANLAFQRAKARLEAVKANSSSAYN.

It belongs to the ATPase epsilon chain family. In terms of assembly, F-type ATPases have 2 components, CF(1) - the catalytic core - and CF(0) - the membrane proton channel. CF(1) has five subunits: alpha(3), beta(3), gamma(1), delta(1), epsilon(1). CF(0) has three main subunits: a, b and c.

The protein resides in the plastid. Its subcellular location is the chloroplast thylakoid membrane. Produces ATP from ADP in the presence of a proton gradient across the membrane. The polypeptide is ATP synthase epsilon chain, chloroplastic (Staurastrum punctulatum (Green alga)).